A 356-amino-acid polypeptide reads, in one-letter code: Gluconolactonase (356 aa).

Residues 1 to 35 (MTTGRMSRRECLSAAVMVPIAAMTATATITGSAQA) constitute a signal peptide (tat-type signal).

As to quaternary structure, homodimer. In terms of processing, predicted to be exported by the Tat system. The position of the signal peptide cleavage has been experimentally proven.

It localises to the periplasm. It carries out the reaction D-glucono-1,5-lactone + H2O = D-gluconate + H(+). It participates in carbohydrate acid metabolism; D-gluconate biosynthesis; D-gluconate from D-glucono-1,5-lactone: step 1/1. Hydrolyzes the gluconolactone formed by glucose-fructose oxidoreductase, and that formed in aerobic conditions by the glucose dehydrogenase present. This is Gluconolactonase (gnl) from Zymomonas mobilis subsp. mobilis (strain ATCC 31821 / ZM4 / CP4).